A 361-amino-acid polypeptide reads, in one-letter code: Phosphoserine aminotransferase (361 aa).

L-glutamate-binding residues include serine 9 and arginine 42. Pyridoxal 5'-phosphate contacts are provided by residues 76-77, tryptophan 102, threonine 153, aspartate 173, and glutamine 196; that span reads GR. Lysine 197 carries the N6-(pyridoxal phosphate)lysine modification. Residue 238–239 participates in pyridoxal 5'-phosphate binding; that stretch reads NT.

It belongs to the class-V pyridoxal-phosphate-dependent aminotransferase family. SerC subfamily. As to quaternary structure, homodimer. Pyridoxal 5'-phosphate is required as a cofactor.

It is found in the cytoplasm. The enzyme catalyses O-phospho-L-serine + 2-oxoglutarate = 3-phosphooxypyruvate + L-glutamate. The catalysed reaction is 4-(phosphooxy)-L-threonine + 2-oxoglutarate = (R)-3-hydroxy-2-oxo-4-phosphooxybutanoate + L-glutamate. Its pathway is amino-acid biosynthesis; L-serine biosynthesis; L-serine from 3-phospho-D-glycerate: step 2/3. The protein operates within cofactor biosynthesis; pyridoxine 5'-phosphate biosynthesis; pyridoxine 5'-phosphate from D-erythrose 4-phosphate: step 3/5. In terms of biological role, catalyzes the reversible conversion of 3-phosphohydroxypyruvate to phosphoserine and of 3-hydroxy-2-oxo-4-phosphonooxybutanoate to phosphohydroxythreonine. The sequence is that of Phosphoserine aminotransferase from Cronobacter sakazakii (strain ATCC BAA-894) (Enterobacter sakazakii).